Here is a 352-residue protein sequence, read N- to C-terminus: Heat-inducible transcription repressor HrcA (352 aa).

The protein belongs to the HrcA family.

In terms of biological role, negative regulator of class I heat shock genes (grpE-dnaK-dnaJ and groELS operons). Prevents heat-shock induction of these operons. The polypeptide is Heat-inducible transcription repressor HrcA (Chlorobium phaeobacteroides (strain BS1)).